A 284-amino-acid chain; its full sequence is NADH-cytochrome b5 reductase 1 (284 aa).

The helical transmembrane segment at 8-28 (PLVIFSTLAAIILAAVAVYVV) threads the bilayer. Residues 41 to 144 (DVFQKFPLIE…RGPKGFFTYT (104 aa)) form the FAD-binding FR-type domain. FAD contacts are provided by residues 124–139 (DSKS…GPKG) and 150–182 (HLGM…KISL).

It belongs to the flavoprotein pyridine nucleotide cytochrome reductase family. In terms of assembly, monomer. Component of the 2-(3-amino-3-carboxypropyl)histidine synthase complex composed of DPH1, DPH2, DPH3 and a NADH-dependent reductase, predominantly CBR1. The cofactor is FAD.

Its subcellular location is the mitochondrion outer membrane. It catalyses the reaction 2 Fe(III)-[cytochrome b5] + NADH = 2 Fe(II)-[cytochrome b5] + NAD(+) + H(+). The enzyme catalyses 2 Fe(3+)-[Dph3] + NADH = 2 Fe(2+)-[Dph3] + NAD(+) + H(+). It participates in protein modification; peptidyl-diphthamide biosynthesis. NADH-dependent reductase for DPH3 and cytochrome b5. Required for the first step of diphthamide biosynthesis, a post-translational modification of histidine which occurs in elongation factor 2. DPH1 and DPH2 transfer a 3-amino-3-carboxypropyl (ACP) group from S-adenosyl-L-methionine (SAM) to a histidine residue, the reaction is assisted by a reduction system comprising DPH3 and a NADH-dependent reductase, predominantly CBR1. By reducing DPH3, also involved in the formation of the tRNA wobble base modification mcm5s 2U (5-methoxycarbonylmethyl-2-thiouridine), mediated by the elongator complex. The cytochrome b5/NADH cytochrome b5 reductase electron transfer system supports the catalytic activity of several sterol biosynthetic enzymes. This chain is NADH-cytochrome b5 reductase 1 (CBR1), found in Meyerozyma guilliermondii (strain ATCC 6260 / CBS 566 / DSM 6381 / JCM 1539 / NBRC 10279 / NRRL Y-324) (Yeast).